A 420-amino-acid polypeptide reads, in one-letter code: Zinc finger protein Pegasus (420 aa).

K5 is covalently cross-linked (Glycyl lysine isopeptide (Lys-Gly) (interchain with G-Cter in SUMO2)). C2H2-type zinc fingers lie at residues 82–104 (LKCR…IRIH), 110–132 (HRCH…MRSH), and 138–161 (YKCE…RRKH). A Glycyl lysine isopeptide (Lys-Gly) (interchain with G-Cter in SUMO2) cross-link involves residue K185. 2 stretches are compositionally biased toward polar residues: residues 223–236 (QTDS…TTPT) and 262–273 (LSSLPPENQNPA). 2 disordered regions span residues 223 to 247 (QTDS…QELM) and 262 to 356 (LSSL…PALP). The segment covering 290–311 (QPSTQAVVSAVSASIPQSSSPT) has biased composition (low complexity). The segment covering 332 to 349 (SEPSAHTSTPSIGNSQPS) has biased composition (polar residues). The segment at 364–387 (HHCQHCDMYFFADNILYTIHMGCH) adopts a C2H2-type 4; degenerate zinc-finger fold. The C2H2-type 5 zinc finger occupies 393–417 (FQCNICGCKCKNKYDFACHFARGQH).

It belongs to the Ikaros C2H2-type zinc-finger protein family. As to quaternary structure, self-associates. Interacts with other family members; IKZF1, IKZF2, IKZF3 and IKZF4.

The protein resides in the nucleus. Functionally, transcriptional repressor that binds the core 5'GNNTGTNG-3' DNA consensus sequence. Involved in megakaryocyte differentiation. The protein is Zinc finger protein Pegasus (IKZF5) of Pongo abelii (Sumatran orangutan).